A 296-amino-acid chain; its full sequence is METVYCTFDHKLSLSDISTLCKLMNIVIPIPAHHHLIGSGNLGLYPIVSSNKDYVHIRNVLRTMVVTILQKVEGNQLVLRKPMTGQQYAIKNTGPFPWEKGDTLTLIPPLSTHSEEKLLKLGDWELTVPLVVPTAIAAEINIRLLCIGLIAVHREYNEMQTIIDELCSIQYRDVLIKLPDIVNDKQSMYSMKTACISLSMITAMAPDIVRTYIDRLTLEDHSMLLIKCQELLSKRTTLSTQRCGQLHATDIKDELKKIKSVLTMIDQINSLTNEKTYFVVCDVSADNRMATCIYKN.

Belongs to the herpesviridae TRX2 protein family. In terms of assembly, interacts with TRX1 and major capisd protein/MCP.

It localises to the virion. The protein resides in the host nucleus. Functionally, structural component of the T=16 icosahedral capsid. The capsid is composed of pentamers and hexamers of major capsid protein/MCP, which are linked together by heterotrimers called triplexes. These triplexes are formed by a single molecule of triplex protein 1/TRX1 and two copies of triplex protein 2/TRX2. Additionally, TRX1 is required for efficient transport of TRX2 to the nucleus, which is the site of capsid assembly. The polypeptide is Triplex capsid protein 2 (Homo sapiens (Human)).